The sequence spans 304 residues: Dihydroorotate dehydrogenase B (NAD(+)), catalytic subunit (304 aa).

Residues Ser-21 and Lys-45–Ala-46 contribute to the FMN site. Substrate-binding positions include Lys-45 and Asn-69 to Leu-73. FMN contacts are provided by Asn-99 and Asn-127. Asn-127 provides a ligand contact to substrate. Catalysis depends on Cys-130, which acts as the Nucleophile. Residues Lys-165 and Ile-191 each contribute to the FMN site. Asn-192 to Thr-193 serves as a coordination point for substrate. FMN contacts are provided by residues Gly-217, Gly-243–Gly-244, and Gly-265–Thr-266.

It belongs to the dihydroorotate dehydrogenase family. Type 1 subfamily. Heterotetramer of 2 PyrK and 2 PyrD type B subunits. It depends on FMN as a cofactor.

The protein localises to the cytoplasm. The enzyme catalyses (S)-dihydroorotate + NAD(+) = orotate + NADH + H(+). The protein operates within pyrimidine metabolism; UMP biosynthesis via de novo pathway; orotate from (S)-dihydroorotate (NAD(+) route): step 1/1. Catalyzes the conversion of dihydroorotate to orotate with NAD(+) as electron acceptor. This is Dihydroorotate dehydrogenase B (NAD(+)), catalytic subunit (pyrD) from Listeria monocytogenes serotype 4a (strain HCC23).